Here is a 369-residue protein sequence, read N- to C-terminus: Biotin synthase (369 aa).

The 219-residue stretch at Asn-51–Lys-269 folds into the Radical SAM core domain. Positions 66, 70, and 73 each coordinate [4Fe-4S] cluster. Residues Cys-110, Cys-141, Cys-201, and Arg-273 each contribute to the [2Fe-2S] cluster site.

This sequence belongs to the radical SAM superfamily. Biotin synthase family. Homodimer. Requires [4Fe-4S] cluster as cofactor. It depends on [2Fe-2S] cluster as a cofactor.

The enzyme catalyses (4R,5S)-dethiobiotin + (sulfur carrier)-SH + 2 reduced [2Fe-2S]-[ferredoxin] + 2 S-adenosyl-L-methionine = (sulfur carrier)-H + biotin + 2 5'-deoxyadenosine + 2 L-methionine + 2 oxidized [2Fe-2S]-[ferredoxin]. It participates in cofactor biosynthesis; biotin biosynthesis; biotin from 7,8-diaminononanoate: step 2/2. Catalyzes the conversion of dethiobiotin (DTB) to biotin by the insertion of a sulfur atom into dethiobiotin via a radical-based mechanism. This Pseudoalteromonas atlantica (strain T6c / ATCC BAA-1087) protein is Biotin synthase.